The primary structure comprises 423 residues: Dihydrolipoyllysine-residue succinyltransferase component of 2-oxoglutarate dehydrogenase complex (423 aa).

The 76-residue stretch at 1 to 76 folds into the Lipoyl-binding domain; that stretch reads MPEVKVPELA…EVGQAIAVIG (76 aa). Lys-42 carries the post-translational modification N6-lipoyllysine. The tract at residues 76-185 is disordered; sequence GEGSGNASKE…APAKEEKKYN (110 aa). The segment covering 80–96 has biased composition (polar residues); the sequence is GNASKENSNDNTPQQND. The segment covering 99-115 has biased composition (basic and acidic residues); the sequence is TNNKKEETTNKSADKAE. The span at 116 to 131 shows a compositional bias: polar residues; it reads VNQTNDDNQQRVNATP. Residues 128–164 form the Peripheral subunit-binding (PSBD) domain; that stretch reads NATPSARRYARENGVNLAEVSPKTNDVVRKEDIDKKQ. Basic and acidic residues predominate over residues 153-164; it reads DVVRKEDIDKKQ. A compositionally biased stretch (low complexity) spans 165–177; it reads QAPASTQTTQQAP. Active-site residues include His-394 and Asp-398.

It belongs to the 2-oxoacid dehydrogenase family. As to quaternary structure, forms a 24-polypeptide structural core with octahedral symmetry. Part of the 2-oxoglutarate dehydrogenase (OGDH) complex composed of E1 (2-oxoglutarate dehydrogenase), E2 (dihydrolipoamide succinyltransferase) and E3 (dihydrolipoamide dehydrogenase); the complex contains multiple copies of the three enzymatic components (E1, E2 and E3). Requires (R)-lipoate as cofactor.

The catalysed reaction is N(6)-[(R)-dihydrolipoyl]-L-lysyl-[protein] + succinyl-CoA = N(6)-[(R)-S(8)-succinyldihydrolipoyl]-L-lysyl-[protein] + CoA. It functions in the pathway amino-acid degradation; L-lysine degradation via saccharopine pathway; glutaryl-CoA from L-lysine: step 6/6. In terms of biological role, E2 component of the 2-oxoglutarate dehydrogenase (OGDH) complex which catalyzes the second step in the conversion of 2-oxoglutarate to succinyl-CoA and CO(2). The chain is Dihydrolipoyllysine-residue succinyltransferase component of 2-oxoglutarate dehydrogenase complex (odhB) from Staphylococcus aureus (strain MRSA252).